We begin with the raw amino-acid sequence, 580 residues long: UPF0329 protein ECU06_0080 (580 aa).

Positions 308 to 330 are enriched in basic and acidic residues; that stretch reads RQKRREREMEKSMKELLRDEEKA. The segment at 308–384 is disordered; sequence RQKRREREME…KTGKKSKGGR (77 aa). Residues 331 to 340 show a composition bias toward basic residues; sequence KSKKGRKKKS. A compositionally biased stretch (acidic residues) spans 351–363; sequence SETEEVEASEEME. Over residues 372-384 the composition is skewed to basic residues; the sequence is ARRKTGKKSKGGR.

It belongs to the UPF0329 family.

This Encephalitozoon cuniculi (strain GB-M1) (Microsporidian parasite) protein is UPF0329 protein ECU06_0080.